Here is a 380-residue protein sequence, read N- to C-terminus: Cytochrome b (380 aa).

4 consecutive transmembrane segments (helical) span residues Phe34–Met54, Trp78–Ile99, Trp114–Leu134, and Phe179–Thr199. His84 and His98 together coordinate heme b. Heme b contacts are provided by His183 and His197. His202 is a binding site for a ubiquinone. Transmembrane regions (helical) follow at residues Thr227 to Ser247, Leu289 to His309, Leu321 to Ser341, and Phe348 to Pro368.

The protein belongs to the cytochrome b family. As to quaternary structure, the cytochrome bc1 complex contains 11 subunits: 3 respiratory subunits (MT-CYB, CYC1 and UQCRFS1), 2 core proteins (UQCRC1 and UQCRC2) and 6 low-molecular weight proteins (UQCRH/QCR6, UQCRB/QCR7, UQCRQ/QCR8, UQCR10/QCR9, UQCR11/QCR10 and a cleavage product of UQCRFS1). This cytochrome bc1 complex then forms a dimer. It depends on heme b as a cofactor.

Its subcellular location is the mitochondrion inner membrane. In terms of biological role, component of the ubiquinol-cytochrome c reductase complex (complex III or cytochrome b-c1 complex) that is part of the mitochondrial respiratory chain. The b-c1 complex mediates electron transfer from ubiquinol to cytochrome c. Contributes to the generation of a proton gradient across the mitochondrial membrane that is then used for ATP synthesis. In Aerodramus vulcanorum (Volcano swiftlet), this protein is Cytochrome b (MT-CYB).